Reading from the N-terminus, the 394-residue chain is Teichoic acid poly(glycerol phosphate) polymerase (394 aa).

The protein belongs to the CDP-glycerol glycerophosphotransferase family.

The protein resides in the cell membrane. It carries out the reaction 4-O-[(2R)-glycerylphospho]-N-acetyl-beta-D-mannosaminyl-(1-&gt;4)-N-acetyl-alpha-D-glucosaminyl di-trans,octa-cis-undecaprenyl diphosphate + n CDP-glycerol = 4-O-{[(2R)-1-glycerylphospho](n)-(2R)-1-glycerylphospho}-N-acetyl-beta-D-mannosaminyl-(1-&gt;4)-N-acetyl-alpha-D-glucosaminyl undecaprenyl diphosphate + n CMP + n H(+). Catalyzes the addition of further 2-8 glycerol phosphate units from CDP-glycerol to the single glycerol phosphate unit bound to the prenolpyrophosphate-linked disaccharide. The function in the cell is unknown since the product is not part of the poly(ribitol phosphate) teichoic acid found in the cell walls. The sequence is that of Teichoic acid poly(glycerol phosphate) polymerase (tarF) from Bacillus spizizenii (strain ATCC 23059 / NRRL B-14472 / W23) (Bacillus subtilis subsp. spizizenii).